Reading from the N-terminus, the 141-residue chain is Cystatin-SA (141 aa).

Residues 1–20 (MAWPLCTLLLLLATQAVALA) form the signal peptide. The Secondary area of contact signature appears at 76–80 (QIVGG). 2 disulfides stabilise this stretch: C94–C104 and C118–C138.

In terms of tissue distribution, expressed in submandibular and sublingual saliva but not in parotid saliva (at protein level). Expressed in submandibular gland and parotid gland.

The protein resides in the secreted. Thiol protease inhibitor. The sequence is that of Cystatin-SA (CST2) from Homo sapiens (Human).